Consider the following 219-residue polypeptide: Thiamine-phosphate synthase (219 aa).

4-amino-2-methyl-5-(diphosphooxymethyl)pyrimidine-binding positions include 48–52 (QLREK) and N80. D81 and D100 together coordinate Mg(2+). S119 contributes to the 4-amino-2-methyl-5-(diphosphooxymethyl)pyrimidine binding site. 2-[(2R,5Z)-2-carboxy-4-methylthiazol-5(2H)-ylidene]ethyl phosphate is bound at residue 145–147 (TPT). A 4-amino-2-methyl-5-(diphosphooxymethyl)pyrimidine-binding site is contributed by K148. 2-[(2R,5Z)-2-carboxy-4-methylthiazol-5(2H)-ylidene]ethyl phosphate is bound by residues G176 and 196 to 197 (VS).

Belongs to the thiamine-phosphate synthase family. Mg(2+) is required as a cofactor.

It carries out the reaction 2-[(2R,5Z)-2-carboxy-4-methylthiazol-5(2H)-ylidene]ethyl phosphate + 4-amino-2-methyl-5-(diphosphooxymethyl)pyrimidine + 2 H(+) = thiamine phosphate + CO2 + diphosphate. The catalysed reaction is 2-(2-carboxy-4-methylthiazol-5-yl)ethyl phosphate + 4-amino-2-methyl-5-(diphosphooxymethyl)pyrimidine + 2 H(+) = thiamine phosphate + CO2 + diphosphate. The enzyme catalyses 4-methyl-5-(2-phosphooxyethyl)-thiazole + 4-amino-2-methyl-5-(diphosphooxymethyl)pyrimidine + H(+) = thiamine phosphate + diphosphate. It functions in the pathway cofactor biosynthesis; thiamine diphosphate biosynthesis; thiamine phosphate from 4-amino-2-methyl-5-diphosphomethylpyrimidine and 4-methyl-5-(2-phosphoethyl)-thiazole: step 1/1. Its function is as follows. Condenses 4-methyl-5-(beta-hydroxyethyl)thiazole monophosphate (THZ-P) and 2-methyl-4-amino-5-hydroxymethyl pyrimidine pyrophosphate (HMP-PP) to form thiamine monophosphate (TMP). The sequence is that of Thiamine-phosphate synthase from Albidiferax ferrireducens (strain ATCC BAA-621 / DSM 15236 / T118) (Rhodoferax ferrireducens).